We begin with the raw amino-acid sequence, 531 residues long: DnaJ homolog subfamily C member 21 (531 aa).

One can recognise a J domain in the interval 3 to 69; sequence CHYEALGVRR…QERAWYDNHR (67 aa). Disordered stretches follow at residues 279-311, 327-474, and 502-531; these read FGDG…AELY, KAMK…VPAE, and KATG…RKNR. The span at 281–311 shows a compositional bias: acidic residues; sequence DGSDENEMEEHELKDEEDGKDSDEAEDAELY. Residues S283 and S302 each carry the phosphoserine modification. Residues 314–338 form a C2H2-type 1 zinc finger; that stretch reads LYCPACDKSFKTEKAMKNHEKSKKH. A compositionally biased stretch (acidic residues) spans 364-375; the sequence is NPLDDNSEEEME. Phosphoserine is present on S370. Residues 381–392 show a composition bias toward basic residues; it reads KLSKKQKKKKQK. Positions 393–403 are enriched in polar residues; sequence PAQNYDDNFNV. Over residues 442-453 the composition is skewed to basic and acidic residues; sequence KPCDDPKSEAKS. Over residues 455 to 464 the composition is skewed to basic residues; sequence PKPKGKKTKD. A C2H2-type 2 zinc finger spans residues 482–506; sequence ISCTTCHSEFPSRNKLFDHLKATGH. S511 bears the Phosphoserine mark. Positions 511-522 are enriched in low complexity; sequence SSSSLNSATSSQ.

As to quaternary structure, interacts with HSPA8, PA2G4 and ZNF622. In terms of tissue distribution, expressed in brain, placenta, kidney and pancreas.

It is found in the cytoplasm. Its subcellular location is the nucleus. The protein localises to the nucleolus. In terms of biological role, may act as a co-chaperone for HSP70. May play a role in ribosomal RNA (rRNA) biogenesis, possibly in the maturation of the 60S subunit. Binds the precursor 45S rRNA. The polypeptide is DnaJ homolog subfamily C member 21 (DNAJC21) (Homo sapiens (Human)).